The following is a 448-amino-acid chain: Tubulin beta-1 chain (448 aa).

Residues Gln-11, Glu-69, Ser-138, Gly-142, Thr-143, Gly-144, Asn-204, and Asn-226 each coordinate GTP. A Mg(2+)-binding site is contributed by Glu-69. Residues 427-448 form a disordered region; sequence DATADEEGDLQEGESEYIEQEE. Acidic residues predominate over residues 429–448; the sequence is TADEEGDLQEGESEYIEQEE.

The protein belongs to the tubulin family. In terms of assembly, dimer of alpha and beta chains. A typical microtubule is a hollow water-filled tube with an outer diameter of 25 nm and an inner diameter of 15 nM. Alpha-beta heterodimers associate head-to-tail to form protofilaments running lengthwise along the microtubule wall with the beta-tubulin subunit facing the microtubule plus end conferring a structural polarity. Microtubules usually have 13 protofilaments but different protofilament numbers can be found in some organisms and specialized cells. Requires Mg(2+) as cofactor.

The protein resides in the cytoplasm. Its subcellular location is the cytoskeleton. Functionally, tubulin is the major constituent of microtubules, a cylinder consisting of laterally associated linear protofilaments composed of alpha- and beta-tubulin heterodimers. Microtubules grow by the addition of GTP-tubulin dimers to the microtubule end, where a stabilizing cap forms. Below the cap, tubulin dimers are in GDP-bound state, owing to GTPase activity of alpha-tubulin. The polypeptide is Tubulin beta-1 chain (Brugia pahangi (Filarial nematode worm)).